Consider the following 406-residue polypeptide: 11-beta-hydroxysteroid dehydrogenase type 2 (406 aa).

82–111 serves as a coordination point for NAD(+); that stretch reads TRAVLITGCDSGFGKETAKKLDAMGFTVLA. A substrate-binding site is contributed by Ser219. Tyr232 (proton acceptor) is an active-site residue. The disordered stretch occupies residues 379 to 406; sequence GQPGATPAPDTAQDNPNPNPDPSLVGAR.

The protein belongs to the short-chain dehydrogenases/reductases (SDR) family. As to quaternary structure, interacts with ligand-free cytoplasmic NR3C2. Highly expressed in the kidney.

The protein resides in the microsome. The protein localises to the endoplasmic reticulum. The enzyme catalyses an 11beta-hydroxysteroid + NAD(+) = an 11-oxosteroid + NADH + H(+). It carries out the reaction corticosterone + NAD(+) = 11-dehydrocorticosterone + NADH + H(+). It catalyses the reaction cortisol + NAD(+) = cortisone + NADH + H(+). The catalysed reaction is 11beta,17beta-dihydroxyandrost-4-ene-3-one + NAD(+) = 17beta-hydroxyandrost-4-ene-3,11-dione + NADH + H(+). The enzyme catalyses 11beta-hydroxyandrost-4-ene-3,17-dione + NAD(+) = androst-4-ene-3,11,17-trione + NADH + H(+). Its pathway is steroid metabolism. Inhibited by carbenoloxone. Its function is as follows. Catalyzes the conversion of biologically active 11beta-hydroxyglucocorticoids (11beta-hydroxysteroid) such as corticosterone, to inactive 11-ketoglucocorticoids (11-oxosteroid) such as 11-dehydrocorticosterone, in the presence of NAD(+). Functions as a dehydrogenase (oxidase), thereby decreasing the concentration of active glucocorticoids, thus protecting the nonselective mineralocorticoid receptor from occupation by glucocorticoids. Plays an important role in maintaining glucocorticoids balance during preimplantation and protects the fetus from excessive maternal corticosterone exposure. Catalyzes the oxidation of 11beta-hydroxytestosterone (11beta,17beta-dihydroxyandrost-4-ene-3-one) to 11-ketotestosterone (17beta-hydroxyandrost-4-ene-3,11-dione), a major bioactive androgen. Catalyzes the conversion of 11beta-hydroxyandrostenedione (11beta-hydroxyandrost-4-ene-3,17-dione) to 11-ketoandrostenedione (androst-4-ene-3,11,17-trione), which can be further metabolized to 11-ketotestosterone. Converts 7-beta-25-dihydroxycholesterol to 7-oxo-25-hydroxycholesterol in vitro. 7-beta-25-dihydroxycholesterol (not 7-oxo-25-hydroxycholesterol) acts as a ligand for the G-protein-coupled receptor (GPCR) Epstein-Barr virus-induced gene 2 (EBI2) and may thereby regulate immune cell migration. May protect ovulating oocytes and fertilizing spermatozoa from the adverse effects of cortisol. The chain is 11-beta-hydroxysteroid dehydrogenase type 2 (HSD11B2) from Oryctolagus cuniculus (Rabbit).